A 186-amino-acid chain; its full sequence is Ribosome-recycling factor (186 aa).

This sequence belongs to the RRF family.

It localises to the cytoplasm. Responsible for the release of ribosomes from messenger RNA at the termination of protein biosynthesis. May increase the efficiency of translation by recycling ribosomes from one round of translation to another. The sequence is that of Ribosome-recycling factor from Limosilactobacillus reuteri (Lactobacillus reuteri).